An 89-amino-acid polypeptide reads, in one-letter code: uncharacterized protein (89 aa).

This is an uncharacterized protein from Methanocaldococcus jannaschii (strain ATCC 43067 / DSM 2661 / JAL-1 / JCM 10045 / NBRC 100440) (Methanococcus jannaschii).